A 336-amino-acid polypeptide reads, in one-letter code: 4-hydroxythreonine-4-phosphate dehydrogenase (336 aa).

H135 and T136 together coordinate substrate. A divalent metal cation contacts are provided by H165, H210, and H265. K273, N282, and R291 together coordinate substrate.

The protein belongs to the PdxA family. Homodimer. It depends on Zn(2+) as a cofactor. Mg(2+) is required as a cofactor. The cofactor is Co(2+).

The protein localises to the cytoplasm. It catalyses the reaction 4-(phosphooxy)-L-threonine + NAD(+) = 3-amino-2-oxopropyl phosphate + CO2 + NADH. Its pathway is cofactor biosynthesis; pyridoxine 5'-phosphate biosynthesis; pyridoxine 5'-phosphate from D-erythrose 4-phosphate: step 4/5. Functionally, catalyzes the NAD(P)-dependent oxidation of 4-(phosphooxy)-L-threonine (HTP) into 2-amino-3-oxo-4-(phosphooxy)butyric acid which spontaneously decarboxylates to form 3-amino-2-oxopropyl phosphate (AHAP). This chain is 4-hydroxythreonine-4-phosphate dehydrogenase, found in Marinobacter nauticus (strain ATCC 700491 / DSM 11845 / VT8) (Marinobacter aquaeolei).